A 248-amino-acid chain; its full sequence is uncharacterized protein (248 aa).

Ser141 is a substrate binding site. Tyr154 acts as the Proton acceptor in catalysis.

The protein belongs to the short-chain dehydrogenases/reductases (SDR) family.

This is an uncharacterized protein from Methylorubrum extorquens (strain ATCC 14718 / DSM 1338 / JCM 2805 / NCIMB 9133 / AM1) (Methylobacterium extorquens).